Consider the following 496-residue polypeptide: Putative ammonium transporter 1 member 5 (496 aa).

A run of 11 helical transmembrane segments spans residues 50–70 (LLFSAYLVFAMQLGFAMLCAG), 85–105 (VLDAAAGGLFYYLFGYAFAFG), 131–151 (FFLYQWAFAIAAAGITSGSIA), 156–176 (FVAYLIYSSFLTGFVYPVVSH), 202–222 (FAGSGVVHMVGGIAGLWGALI), 246–266 (LVVLGTFLLWFGWYGFNPGSF), 284–306 (GIGRTAVTTTLSGCTAALTTLFG), 314–334 (WNVTDVCNGLLGGFAAITAGC), 336–356 (VVDPWAAIVCGFVASLVLIGC), 369–389 (LEAAQLHGGCGAWGLIFVGLF), and 422–442 (LVQIIVIVGWVSATMGTLFFI). The residue at position 485 (S485) is a Phosphoserine.

This sequence belongs to the ammonia transporter channel (TC 1.A.11.2) family.

It is found in the membrane. In terms of biological role, involved in ammonium transport. The protein is Putative ammonium transporter 1 member 5 (AMT1-5) of Arabidopsis thaliana (Mouse-ear cress).